Here is a 184-residue protein sequence, read N- to C-terminus: Photosystem I assembly protein Ycf4 (184 aa).

2 helical membrane-spanning segments follow: residues 22 to 42 (FCWAFILFLGSLGFLLVGTSS) and 57 to 77 (IIFFPQGIVMSFYGIAGLFIS).

The protein belongs to the Ycf4 family.

The protein resides in the plastid. The protein localises to the chloroplast thylakoid membrane. Seems to be required for the assembly of the photosystem I complex. The protein is Photosystem I assembly protein Ycf4 of Lepidium virginicum (Virginia pepperweed).